The primary structure comprises 157 residues: S-ribosylhomocysteine lyase (157 aa).

Fe cation contacts are provided by histidine 54, histidine 58, and cysteine 126.

Belongs to the LuxS family. As to quaternary structure, homodimer. Fe cation serves as cofactor.

It carries out the reaction S-(5-deoxy-D-ribos-5-yl)-L-homocysteine = (S)-4,5-dihydroxypentane-2,3-dione + L-homocysteine. Functionally, involved in the synthesis of autoinducer 2 (AI-2) which is secreted by bacteria and is used to communicate both the cell density and the metabolic potential of the environment. The regulation of gene expression in response to changes in cell density is called quorum sensing. Catalyzes the transformation of S-ribosylhomocysteine (RHC) to homocysteine (HC) and 4,5-dihydroxy-2,3-pentadione (DPD). The chain is S-ribosylhomocysteine lyase from Bacillus licheniformis (strain ATCC 14580 / DSM 13 / JCM 2505 / CCUG 7422 / NBRC 12200 / NCIMB 9375 / NCTC 10341 / NRRL NRS-1264 / Gibson 46).